The following is a 317-amino-acid chain: Lipoyl synthase (317 aa).

[4Fe-4S] cluster is bound by residues Cys-59, Cys-64, Cys-70, Cys-85, Cys-89, Cys-92, and Ser-298. The Radical SAM core domain occupies Trp-71–Leu-287.

This sequence belongs to the radical SAM superfamily. Lipoyl synthase family. [4Fe-4S] cluster is required as a cofactor.

Its subcellular location is the cytoplasm. The catalysed reaction is [[Fe-S] cluster scaffold protein carrying a second [4Fe-4S](2+) cluster] + N(6)-octanoyl-L-lysyl-[protein] + 2 oxidized [2Fe-2S]-[ferredoxin] + 2 S-adenosyl-L-methionine + 4 H(+) = [[Fe-S] cluster scaffold protein] + N(6)-[(R)-dihydrolipoyl]-L-lysyl-[protein] + 4 Fe(3+) + 2 hydrogen sulfide + 2 5'-deoxyadenosine + 2 L-methionine + 2 reduced [2Fe-2S]-[ferredoxin]. It participates in protein modification; protein lipoylation via endogenous pathway; protein N(6)-(lipoyl)lysine from octanoyl-[acyl-carrier-protein]: step 2/2. Its function is as follows. Catalyzes the radical-mediated insertion of two sulfur atoms into the C-6 and C-8 positions of the octanoyl moiety bound to the lipoyl domains of lipoate-dependent enzymes, thereby converting the octanoylated domains into lipoylated derivatives. This Bartonella bacilliformis (strain ATCC 35685 / KC583 / Herrer 020/F12,63) protein is Lipoyl synthase.